We begin with the raw amino-acid sequence, 666 residues long: Threonine--tRNA ligase (666 aa).

In terms of domain architecture, TGS spans 7–70 (QQVTLTVTLP…TADCTAEIIT (64 aa)). A catalytic region spans residues 253 to 555 (DHRKLGTELE…LIEHTAGNFP (303 aa)). The Zn(2+) site is built by Cys-351, His-402, and His-532.

It belongs to the class-II aminoacyl-tRNA synthetase family. Homodimer. Zn(2+) is required as a cofactor.

It is found in the cytoplasm. The enzyme catalyses tRNA(Thr) + L-threonine + ATP = L-threonyl-tRNA(Thr) + AMP + diphosphate + H(+). In terms of biological role, catalyzes the attachment of threonine to tRNA(Thr) in a two-step reaction: L-threonine is first activated by ATP to form Thr-AMP and then transferred to the acceptor end of tRNA(Thr). Also edits incorrectly charged L-seryl-tRNA(Thr). The polypeptide is Threonine--tRNA ligase (Chlorobium phaeovibrioides (strain DSM 265 / 1930) (Prosthecochloris vibrioformis (strain DSM 265))).